A 308-amino-acid chain; its full sequence is Taste receptor type 2 member 107 (308 aa).

The Extracellular portion of the chain corresponds to 1 to 7 (MLNSAEG). Residues 8–28 (ILLCVVTSEAVLGVLGDTYIA) form a helical membrane-spanning segment. Residues 29–43 (LFNCMDYAKNKKLSK) lie on the Cytoplasmic side of the membrane. A helical transmembrane segment spans residues 44–64 (IGFILIGLAISRIGVVWIIIL). At 65 to 87 (QGYIQVFFPHMLTSGNITEYITY) the chain is on the extracellular side. Residue asparagine 80 is glycosylated (N-linked (GlcNAc...) asparagine). Residues 88 to 108 (IWVFLNHLSVWFVTNLNILYF) traverse the membrane as a helical segment. Topologically, residues 109 to 125 (LKIANFSNSVFLWLKRR) are cytoplasmic. The chain crosses the membrane as a helical span at residues 126 to 146 (VNAVFIFLSGCLLTSWLLCFP). At 147–180 (QMTKILQNSKMHQRNTSWVHQRKNYFLINQSVTN) the chain is on the extracellular side. 2 N-linked (GlcNAc...) asparagine glycosylation sites follow: asparagine 161 and asparagine 175. A helical membrane pass occupies residues 181–201 (LGIFFFIIVSLITCFLLIVFL). At 202–232 (WRHVRQMHSDVSGFRDHSTKVHVKAMKFLIS) the chain is on the cytoplasmic side. A helical membrane pass occupies residues 233–253 (FMVFFILHFVGLSIEVLCFIL). Over 254-258 (PQNKL) the chain is Extracellular. A helical membrane pass occupies residues 259–279 (LFITGLTATCLYPCGHSIIVI). Topologically, residues 280 to 308 (LGNKQLKQASLKALQQLKCCETKGNFRVK) are cytoplasmic.

It belongs to the G-protein coupled receptor T2R family.

It is found in the membrane. In terms of biological role, putative taste receptor which may play a role in the perception of bitterness. This Mus musculus (Mouse) protein is Taste receptor type 2 member 107.